A 419-amino-acid polypeptide reads, in one-letter code: UDP-N-acetylglucosamine 1-carboxyvinyltransferase (419 aa).

22 to 23 (KN) contacts phosphoenolpyruvate. A UDP-N-acetyl-alpha-D-glucosamine-binding site is contributed by Arg-91. The Proton donor role is filled by Cys-115. Position 115 is a 2-(S-cysteinyl)pyruvic acid O-phosphothioketal (Cys-115). UDP-N-acetyl-alpha-D-glucosamine-binding positions include 120-124 (RPVDL), 160-163 (KVSV), Asp-305, and Ile-327.

It belongs to the EPSP synthase family. MurA subfamily.

It is found in the cytoplasm. The enzyme catalyses phosphoenolpyruvate + UDP-N-acetyl-alpha-D-glucosamine = UDP-N-acetyl-3-O-(1-carboxyvinyl)-alpha-D-glucosamine + phosphate. It participates in cell wall biogenesis; peptidoglycan biosynthesis. Cell wall formation. Adds enolpyruvyl to UDP-N-acetylglucosamine. In Citrobacter koseri (strain ATCC BAA-895 / CDC 4225-83 / SGSC4696), this protein is UDP-N-acetylglucosamine 1-carboxyvinyltransferase.